The chain runs to 291 residues: BTB/POZ domain-containing protein 19 (291 aa).

A BTB domain is found at 29–98 (SDVRFVVGQE…LYTNSAKLQR (70 aa)). The 101-residue stretch at 134-234 (CEALQVAVTF…LALLAPAELS (101 aa)) folds into the BACK domain.

The polypeptide is BTB/POZ domain-containing protein 19 (BTBD19) (Bos taurus (Bovine)).